The following is a 464-amino-acid chain: 3-isopropylmalate dehydratase large subunit (464 aa).

[4Fe-4S] cluster contacts are provided by Cys337, Cys397, and Cys400.

Belongs to the aconitase/IPM isomerase family. LeuC type 1 subfamily. As to quaternary structure, heterodimer of LeuC and LeuD. [4Fe-4S] cluster serves as cofactor.

It catalyses the reaction (2R,3S)-3-isopropylmalate = (2S)-2-isopropylmalate. It functions in the pathway amino-acid biosynthesis; L-leucine biosynthesis; L-leucine from 3-methyl-2-oxobutanoate: step 2/4. Catalyzes the isomerization between 2-isopropylmalate and 3-isopropylmalate, via the formation of 2-isopropylmaleate. This is 3-isopropylmalate dehydratase large subunit from Bacillus anthracis (strain A0248).